The primary structure comprises 302 residues: GATA transcription factor 28 (302 aa).

A disordered region spans residues 47–66 (NAGGMSEGVETDIPSHPGNV). Positions 77-112 (GSEQGDQLTLSFQGQVYVFDSVLPEKVQAVLLLLGG) constitute a Tify domain. A disordered region spans residues 119 to 141 (APPGLGSPHQNNRVSSLPGTPQR). Over residues 126-141 (PHQNNRVSSLPGTPQR) the composition is skewed to polar residues. The region spanning 147–189 (RLASLVRFREKRKGRNFDKKIRYTVRKEVALRMQRNKGQFTSA) is the CCT domain. The segment at 217–273 (QHQEISCRHCGIGEKSTPMMRRGPAGPRTLCNACGLMWANKGAFRDLSKASPQTAQN) adopts a GATA-type zinc-finger fold.

It belongs to the type IV zinc-finger family. Class C subfamily. Predominantly expressed in shoot apices, inflorescences and roots.

It is found in the nucleus. Its function is as follows. Transcriptional activator that specifically binds 5'-GATA-3' or 5'-GAT-3' motifs within gene promoters. This Arabidopsis thaliana (Mouse-ear cress) protein is GATA transcription factor 28 (GATA28).